We begin with the raw amino-acid sequence, 1054 residues long: NACHT, LRR and PYD domains-containing protein 12 (1054 aa).

The Pyrin domain occupies 1–95; the sequence is MLPSTARDGL…WERGQGEDLV (95 aa). Residues 129–201 form the FISNA domain; the sequence is YKDYVRRKFQ…SPIQMETLFE (73 aa). The NACHT domain maps to 211 to 528; the sequence is HTVVLQGAAG…EFFAAMYCAL (318 aa). ATP is bound at residue 217–224; sequence GAAGMGKS. 8 LRR repeats span residues 821 to 841, 850 to 871, 878 to 899, 907 to 928, 935 to 955, 964 to 985, 992 to 1013, and 1021 to 1042; these read YLVELDLTGNPLEDSGLKLLC, RLRTLWLKICHLGQASCEDLAS, SLLELDLGLNDLGDSGVLLLCE, KLQTLRLGICRLGSVACVGIAS, CLQELDLSFNDLGDRGLQLLG, RLQKLWLDNCGLTSKACEDLSS, TLHELYLTNNALGDTGVCLLCK, and KLRVLWLFGMDLNKKTHRRMAA.

The protein belongs to the NLRP family. As to quaternary structure, interacts (via pyrin domain) with ASC. Interacts (via pyrin domain) with FAF1 (via UBA domain). Interacts with MAP3K14; this interaction promotes proteasomal degradation of MAP3K14. Interacts with NOD2; this interaction promotes degradation of NOD2 through the ubiquitin-proteasome pathway. Interacts with HSPA1A and HSPA8. Interacts with HSP90AA1. Interacts with TRIM25; this interaction inhibits RIGI-mediated signaling pathway. In terms of tissue distribution, mainly expressed in dendritic cells (DCs) and neutrophils.

It localises to the cytoplasm. Functionally, plays an essential role as an potent mitigator of inflammation. Primarily expressed in dendritic cells and macrophages, inhibits both canonical and non-canonical NF-kappa-B and ERK activation pathways. Functions as a negative regulator of NOD2 by targeting it to degradation via the proteasome pathway. In turn, promotes bacterial tolerance. Also inhibits the RIGI-mediated immune signaling against RNA viruses by reducing the E3 ubiquitin ligase TRIM25-mediated 'Lys-63'-linked RIGI activation but enhancing the E3 ubiquitin ligase RNF125-mediated 'Lys-48'-linked RIGI degradation. Also acts as a negative regulator of inflammatory response to mitigate obesity and obesity-associated diseases in adipose tissue. The protein is NACHT, LRR and PYD domains-containing protein 12 (Nlrp12) of Mus musculus (Mouse).